A 277-amino-acid polypeptide reads, in one-letter code: MLVHPQFNPIALDLGFFQIHWYGLTYLAAFGLFYFLATRRIRQAPYASGSGPAWTARDVEDLLFFGVVGVILGGRLGYVLFYKPTYYLANLSEIPAVWKGGMAFHGGLLGVIVAMALFAHLRGRKFFEVTDLVAPCVPTGLAMGRIGNFINGELWGRAADASLPWAMVFPQSGSDLPRHPSQLYQFALEGLALFALTWFYGHSRSAHVGADGRPIWGRVSGLFVGGYGVFRFIAEYFREPDSFLGLLAFNLSMGQWLCVPMIVAGALIWWSAGRRRV.

3 helical membrane passes run 16–36 (FFQI…FYFL), 62–82 (LLFF…VLFY), and 101–121 (GMAF…FAHL). An a 1,2-diacyl-sn-glycero-3-phospho-(1'-sn-glycerol)-binding site is contributed by Arg-145. 2 helical membrane-spanning segments follow: residues 214–234 (PIWG…RFIA) and 243–263 (FLGL…PMIV).

The protein belongs to the Lgt family.

Its subcellular location is the cell inner membrane. The enzyme catalyses L-cysteinyl-[prolipoprotein] + a 1,2-diacyl-sn-glycero-3-phospho-(1'-sn-glycerol) = an S-1,2-diacyl-sn-glyceryl-L-cysteinyl-[prolipoprotein] + sn-glycerol 1-phosphate + H(+). It functions in the pathway protein modification; lipoprotein biosynthesis (diacylglyceryl transfer). In terms of biological role, catalyzes the transfer of the diacylglyceryl group from phosphatidylglycerol to the sulfhydryl group of the N-terminal cysteine of a prolipoprotein, the first step in the formation of mature lipoproteins. This chain is Phosphatidylglycerol--prolipoprotein diacylglyceryl transferase, found in Leptothrix cholodnii (strain ATCC 51168 / LMG 8142 / SP-6) (Leptothrix discophora (strain SP-6)).